We begin with the raw amino-acid sequence, 60 residues long: Large ribosomal subunit protein bL32 (60 aa).

Positions 1 to 44 are disordered; that stretch reads MAVQQNKKSRSARDMRRSHDALSENALSVEKTTGEVHLRHHVSP. A compositionally biased stretch (basic and acidic residues) spans 11-22; that stretch reads SARDMRRSHDAL.

It belongs to the bacterial ribosomal protein bL32 family.

This Pseudomonas putida (strain W619) protein is Large ribosomal subunit protein bL32.